The chain runs to 122 residues: Large ribosomal subunit protein uL14 (122 aa).

The protein belongs to the universal ribosomal protein uL14 family. In terms of assembly, part of the 50S ribosomal subunit. Forms a cluster with proteins L3 and L19. In the 70S ribosome, L14 and L19 interact and together make contacts with the 16S rRNA in bridges B5 and B8.

Binds to 23S rRNA. Forms part of two intersubunit bridges in the 70S ribosome. The polypeptide is Large ribosomal subunit protein uL14 (Nautilia profundicola (strain ATCC BAA-1463 / DSM 18972 / AmH)).